The primary structure comprises 103 residues: Large ribosomal subunit protein bL21 (103 aa).

Belongs to the bacterial ribosomal protein bL21 family. Part of the 50S ribosomal subunit. Contacts protein L20.

Functionally, this protein binds to 23S rRNA in the presence of protein L20. The chain is Large ribosomal subunit protein bL21 from Clostridioides difficile (strain 630) (Peptoclostridium difficile).